We begin with the raw amino-acid sequence, 408 residues long: Neutral cholesterol ester hydrolase 1 (408 aa).

At 1–4 (MRSS) the chain is on the cytoplasmic side. A helical; Signal-anchor for type II membrane protein transmembrane segment spans residues 5–25 (CVLLAALLALVAYYVYIPLPS). Topologically, residues 26–408 (AVSDPWKLML…SYFKWLDQNL (383 aa)) are lumenal. The short motif at 113-115 (HGG) is the Involved in the stabilization of the negatively charged intermediate by the formation of the oxyanion hole element. The active site involves Ser-191. N-linked (GlcNAc...) asparagine glycosylation occurs at Asn-270. Residue Asp-348 is part of the active site. N-linked (GlcNAc...) asparagine glycosylation occurs at Asn-367. The active site involves His-378. The N-linked (GlcNAc...) asparagine glycan is linked to Asn-389.

It belongs to the 'GDXG' lipolytic enzyme family. N-glycosylated.

The protein resides in the cell membrane. The protein localises to the microsome. It catalyses the reaction a 1-O-alkyl-2-acetyl-sn-glycerol + H2O = a 1-O-alkyl-sn-glycerol + acetate + H(+). It carries out the reaction 1-O-hexadecyl-2-acetyl-sn-glycerol + H2O = 1-O-hexadecyl-sn-glycerol + acetate + H(+). The enzyme catalyses a cholesterol ester + H2O = cholesterol + a fatty acid + H(+). The catalysed reaction is cholesteryl (9Z-octadecenoate) + H2O = cholesterol + (9Z)-octadecenoate + H(+). In terms of biological role, hydrolyzes 2-acetyl monoalkylglycerol ether (1-O-alkyl-2-acetyl-sn-glycerol), the penultimate precursor of the pathway for de novo synthesis of platelet-activating factor. May be responsible for the hydrolysis of cholesterol esters (such as cholesteryl (9Z-octadecenoate)) in macrophages. Also involved in organ detoxification by hydrolyzing exogenous organophosphorus compounds. In Rattus norvegicus (Rat), this protein is Neutral cholesterol ester hydrolase 1 (Nceh1).